A 308-amino-acid polypeptide reads, in one-letter code: Testis-expressed protein 52 (308 aa).

In terms of tissue distribution, expressed in Testis.

This Mus musculus (Mouse) protein is Testis-expressed protein 52.